A 261-amino-acid polypeptide reads, in one-letter code: Imidazole glycerol phosphate synthase subunit HisF (261 aa).

Residues aspartate 11 and aspartate 130 contribute to the active site.

It belongs to the HisA/HisF family. In terms of assembly, heterodimer of HisH and HisF.

It is found in the cytoplasm. The catalysed reaction is 5-[(5-phospho-1-deoxy-D-ribulos-1-ylimino)methylamino]-1-(5-phospho-beta-D-ribosyl)imidazole-4-carboxamide + L-glutamine = D-erythro-1-(imidazol-4-yl)glycerol 3-phosphate + 5-amino-1-(5-phospho-beta-D-ribosyl)imidazole-4-carboxamide + L-glutamate + H(+). It functions in the pathway amino-acid biosynthesis; L-histidine biosynthesis; L-histidine from 5-phospho-alpha-D-ribose 1-diphosphate: step 5/9. Its function is as follows. IGPS catalyzes the conversion of PRFAR and glutamine to IGP, AICAR and glutamate. The HisF subunit catalyzes the cyclization activity that produces IGP and AICAR from PRFAR using the ammonia provided by the HisH subunit. This is Imidazole glycerol phosphate synthase subunit HisF from Heliobacterium modesticaldum (strain ATCC 51547 / Ice1).